Reading from the N-terminus, the 241-residue chain is Uridylate kinase (241 aa).

15–18 (KLSG) contributes to the ATP binding site. Residues 23–28 (GTEGFG) are involved in allosteric activation by GTP. G57 serves as a coordination point for UMP. ATP contacts are provided by G58 and R62. UMP-binding positions include D77 and 138-145 (TGNPFFTT). Residues T165, F171, and D174 each contribute to the ATP site.

The protein belongs to the UMP kinase family. In terms of assembly, homohexamer.

Its subcellular location is the cytoplasm. The catalysed reaction is UMP + ATP = UDP + ADP. The protein operates within pyrimidine metabolism; CTP biosynthesis via de novo pathway; UDP from UMP (UMPK route): step 1/1. Allosterically activated by GTP. Inhibited by UTP. Functionally, catalyzes the reversible phosphorylation of UMP to UDP. The protein is Uridylate kinase of Escherichia coli O139:H28 (strain E24377A / ETEC).